A 213-amino-acid polypeptide reads, in one-letter code: Receptor-binding cancer antigen expressed on SiSo cells (213 aa).

The Extracellular portion of the chain corresponds to 1 to 6; the sequence is MAITQF. A helical; Signal-anchor for type III membrane protein membrane pass occupies residues 7–27; the sequence is RLFKVCTCLATVLSFLKRLIC. Over 28–213 the chain is Cytoplasmic; it reads RSGRGRKLSG…EQNKMGVKLS (186 aa). The residue at position 36 (serine 36) is a Phosphoserine. Threonine 41 bears the Phosphothreonine mark. Tyrosine 94 is modified (phosphotyrosine). The stretch at 168-209 forms a coiled coil; that stretch reads QAEEVLRQQKIADREKRAAEQQRKKMEKEAQRLLKKEQNKMG. Basic and acidic residues predominate over residues 179–206; it reads ADREKRAAEQQRKKMEKEAQRLLKKEQN. The interval 179-213 is disordered; it reads ADREKRAAEQQRKKMEKEAQRLLKKEQNKMGVKLS.

As to quaternary structure, homodimer.

It localises to the golgi apparatus membrane. Its function is as follows. May participate in suppression of cell proliferation and induces apoptotic cell death through activation of interleukin-1-beta converting enzyme (ICE)-like proteases. The polypeptide is Receptor-binding cancer antigen expressed on SiSo cells (Ebag9) (Rattus norvegicus (Rat)).